The primary structure comprises 178 residues: Nucleolar protein 16 (178 aa).

Residues 1 to 31 (MPKAKGKTRRQKFGYSVNRKRLNRNARRKAA) are disordered. Phosphothreonine is present on T8. S16 is modified (phosphoserine). K74 participates in a covalent cross-link: Glycyl lysine isopeptide (Lys-Gly) (interchain with G-Cter in SUMO2). N6-acetyllysine is present on K90. T144 carries the post-translational modification Phosphothreonine. Glycyl lysine isopeptide (Lys-Gly) (interchain with G-Cter in SUMO2) cross-links involve residues F166, L167, K172, and R173.

The protein belongs to the NOP16 family.

Its subcellular location is the nucleus. It is found in the nucleolus. The sequence is that of Nucleolar protein 16 (NOP16) from Homo sapiens (Human).